We begin with the raw amino-acid sequence, 1467 residues long: Helicase ARIP4 (1467 aa).

Disordered regions lie at residues 1 to 150 and 186 to 234; these read MSDE…YAAP and DSSS…GGTH. Over residues 11–49 the composition is skewed to acidic residues; that stretch reads PDLDPDVELEDAEEEEEEEEVAVEECDRDDEEDLLDDPS. A compositionally biased stretch (low complexity) spans 72-82; that stretch reads TSTTSSQSEPS. Residues 100–115 show a composition bias toward basic residues; sequence KKRAQKPSHMRRNIRK. Glycyl lysine isopeptide (Lys-Gly) (interchain with G-Cter in SUMO2) cross-links involve residues K115 and K127. Composition is skewed to basic and acidic residues over residues 133-147 and 192-201; these read ELERRKRLEQQRKDY and EDEKSSRDEV. K272 participates in a covalent cross-link: Glycyl lysine isopeptide (Lys-Gly) (interchain with G-Cter in SUMO2). A Helicase ATP-binding domain is found at 292 to 512; the sequence is RFKTSSGFGC…WCMVDFVRPD (221 aa). 305-312 serves as a coordination point for ATP; the sequence is HSMGLGKT. A DEAH box motif is present at residues 463–466; the sequence is DEGH. An LXXLL motif 1 motif is present at residues 551-555; the sequence is LHSLL. Positions 649–673 are disordered; the sequence is GSAGTSARCPPQGTKGKGEDSTLAS. Glycyl lysine isopeptide (Lys-Gly) (interchain with G-Cter in SUMO2) cross-links involve residues K665, K682, K759, K901, K1014, and K1018. The region spanning 728 to 896 is the Helicase C-terminal domain; it reads HLIEESVKLG…RVVDDLNPML (169 aa). The segment at 1120–1171 is disordered; it reads RATGKPKVPEDGRMAASGSQGPSCESTSNGRHSASSPKAPDPEGLARPVSPD. Residues 1136–1155 are compositionally biased toward polar residues; it reads SGSQGPSCESTSNGRHSASS. Phosphoserine occurs at positions 1169 and 1172. Disordered regions lie at residues 1184 to 1221 and 1247 to 1284; these read DVAAARESRQSSPSTNAALPGPPAQLMDSSAVPGTALG and PVLDLRGHKRKLATPPAAQESSRRRSRKGHLPAPVQPY. The residue at position 1260 (T1260) is a Phosphothreonine. The LXXLL motif 2 signature appears at 1329–1333; that stretch reads LSNLL. The disordered stretch occupies residues 1445–1467; sequence AEVGFSSNDDEDKDDDVIEVTGK. The span at 1452–1467 shows a compositional bias: acidic residues; sequence NDDEDKDDDVIEVTGK.

Belongs to the SNF2/RAD54 helicase family. As to quaternary structure, interacts with AR via its N-terminus. Interacts with DYRK1A. Binds DNA and mononucleosomes, but does not seem to form large multiprotein complexes. Post-translationally, sumoylated.

Its subcellular location is the nucleus. It carries out the reaction ATP + H2O = ADP + phosphate + H(+). Its activity is regulated as follows. Enzyme activity is enhanced by dsDNA (double-stranded DNA) and ssDNA (single-stranded DNA). Functionally, DNA helicase that modulates androgen receptor (AR)-dependent transactivation in a promoter-dependent manner. Not able to remodel mononucleosomes in vitro. This Homo sapiens (Human) protein is Helicase ARIP4 (RAD54L2).